The primary structure comprises 157 residues: 2-C-methyl-D-erythritol 2,4-cyclodiphosphate synthase (157 aa).

Asp8 and His10 together coordinate a divalent metal cation. 4-CDP-2-C-methyl-D-erythritol 2-phosphate contacts are provided by residues 8-10 and 34-35; these read DIH and HS. An a divalent metal cation-binding site is contributed by His42. Residues 56 to 58, 61 to 65, 132 to 135, and Arg142 each bind 4-CDP-2-C-methyl-D-erythritol 2-phosphate; these read DIG, FPDTD, and TTNE.

The protein belongs to the IspF family. As to quaternary structure, homotrimer. The cofactor is a divalent metal cation.

It carries out the reaction 4-CDP-2-C-methyl-D-erythritol 2-phosphate = 2-C-methyl-D-erythritol 2,4-cyclic diphosphate + CMP. It functions in the pathway isoprenoid biosynthesis; isopentenyl diphosphate biosynthesis via DXP pathway; isopentenyl diphosphate from 1-deoxy-D-xylulose 5-phosphate: step 4/6. In terms of biological role, involved in the biosynthesis of isopentenyl diphosphate (IPP) and dimethylallyl diphosphate (DMAPP), two major building blocks of isoprenoid compounds. Catalyzes the conversion of 4-diphosphocytidyl-2-C-methyl-D-erythritol 2-phosphate (CDP-ME2P) to 2-C-methyl-D-erythritol 2,4-cyclodiphosphate (ME-CPP) with a corresponding release of cytidine 5-monophosphate (CMP). The polypeptide is 2-C-methyl-D-erythritol 2,4-cyclodiphosphate synthase (Chloroherpeton thalassium (strain ATCC 35110 / GB-78)).